We begin with the raw amino-acid sequence, 515 residues long: MGSGQWHVEKRSTFRNDSFVREYGIVPETGCLSIIVLGASGDLAKKKTFPALFNLYRQGFLNPDEVHIFGYARTKISDEELRDRIRGYLVDEKNAEQAEALSKFLQLIKYVSGPYDAEEGFQRLDKAISEHEISKNSTEGSSRRLFYLALPPSVYPSVCKMIKTCCMNKSDLGGWTRIVVEKPFGKDLESAEQLSSQIGELFDESQIYRIDHYLGKELVQNMLVLRFANRFFLPLWNRDNIENVQIVFREDFGTEGRGGYFDEYGIIRDIIQNHLLQVLCLVAMEKPISLKPEHIRDEKVKVLQSVVPISDDEVVLGQYEGYRDDDTVPNDSNTPTFATTILRIHNERWEGVPFILKAGKALNSRKAEIRIQFKDVPGDIFRCQKQGRNEFVIRLQPSEAMYMKLTVKQPGLDMNTVQSELDLSYGQRYQGVAIPEAYERLILDTIKGDQQHFVRRDELKVAWEIFTPLLHRIDKGEVKSIPYKPGSRGPKEADQLLEKAGYLQTHGYIWIPPTL.

NADP(+) is bound by residues 38 to 45 (GASGDLAK), R73, Y155, and K182. D-glucose 6-phosphate contacts are provided by residues K182, 212 to 216 (HYLGK), E250, and D269. H274 functions as the Proton acceptor in the catalytic mechanism. K357 lines the NADP(+) pocket. Residues K360 and R365 each coordinate D-glucose 6-phosphate. Positions 366, 370, and 394 each coordinate NADP(+). D-glucose 6-phosphate is bound at residue Q396. NADP(+)-binding positions include 402–404 (YMK), 422–424 (DLS), R488, and W510.

The protein belongs to the glucose-6-phosphate dehydrogenase family. Forms homodimer. Expressed in roots, leaves, stems, buds, flowers and siliques.

It is found in the cytoplasm. The protein resides in the cytosol. It carries out the reaction D-glucose 6-phosphate + NADP(+) = 6-phospho-D-glucono-1,5-lactone + NADPH + H(+). The protein operates within carbohydrate degradation; pentose phosphate pathway; D-ribulose 5-phosphate from D-glucose 6-phosphate (oxidative stage): step 1/3. Its activity is regulated as follows. Regulated by metabolites. Functionally, catalyzes the rate-limiting step of the oxidative pentose-phosphate pathway, which represents a route for the dissimilation of carbohydrates besides glycolysis. The main function of this enzyme is to provide reducing power (NADPH) and pentose phosphates for fatty acid and nucleic acid synthesis which are involved in membrane synthesis and cell division. The protein is Glucose-6-phosphate 1-dehydrogenase 6, cytoplasmic of Arabidopsis thaliana (Mouse-ear cress).